Here is a 328-residue protein sequence, read N- to C-terminus: Tetraacyldisaccharide 4'-kinase (328 aa).

Thr-55–Thr-62 contributes to the ATP binding site.

The protein belongs to the LpxK family.

It carries out the reaction a lipid A disaccharide + ATP = a lipid IVA + ADP + H(+). Its pathway is glycolipid biosynthesis; lipid IV(A) biosynthesis; lipid IV(A) from (3R)-3-hydroxytetradecanoyl-[acyl-carrier-protein] and UDP-N-acetyl-alpha-D-glucosamine: step 6/6. In terms of biological role, transfers the gamma-phosphate of ATP to the 4'-position of a tetraacyldisaccharide 1-phosphate intermediate (termed DS-1-P) to form tetraacyldisaccharide 1,4'-bis-phosphate (lipid IVA). The chain is Tetraacyldisaccharide 4'-kinase from Escherichia coli O81 (strain ED1a).